Here is a 983-residue protein sequence, read N- to C-terminus: Polyhomeotic-like protein 3 (983 aa).

Disordered stretches follow at residues 1–34 (MDTE…MQQP), 103–149 (LSSG…SSTS), 225–283 (VLSS…TAVT), 313–332 (LHSP…QQQQ), 339–410 (LQNS…SQSP), 477–509 (PGQQ…STSP), and 601–620 (DECV…PAAI). Low complexity-rich tracts occupy residues 9 to 29 (TSSV…TSSS) and 103 to 126 (LSSG…SQTS). Over residues 127-139 (INLSTSPTPAQLI) the composition is skewed to polar residues. Low complexity predominate over residues 140-149 (SRSQASSSTS). Residues 225 to 257 (VLSSSQNGPPKSTSQTQSLTICHNKTTVTSSKI) show a composition bias toward polar residues. Positions 258 to 271 (SQRDPSPESNKKGE) are enriched in basic and acidic residues. Residues serine 263 and serine 272 each carry the phosphoserine modification. Residues 274–283 (SLESRSTAVT) show a composition bias toward polar residues. At serine 315 the chain carries Phosphoserine. Polar residues predominate over residues 365 to 383 (SNAQSQHCSPIQSHPSPLT). Residues 384 to 398 (VSPNQSQSAQQSVVV) are compositionally biased toward low complexity. Residues 477–489 (PGQQIVSPSHQQY) show a composition bias toward polar residues. Residues 490-506 (SSLQSSPIPIASPPQMS) show a composition bias toward low complexity. 2 positions are modified to phosphothreonine: threonine 609 and threonine 614. At serine 616 the chain carries Phosphoserine. Residues lysine 691 and lysine 732 each participate in a glycyl lysine isopeptide (Lys-Gly) (interchain with G-Cter in SUMO2) cross-link. The HD1 signature appears at 691 to 720 (KPPQAIVKPQILTHVIEGFVIQEGLEPFPV). A phosphoserine mark is found at serine 761 and serine 762. The FCS-type zinc-finger motif lies at 776-810 (EEMDSELLKCEFCGKMGYANEFLRSKRFCTMSCAK). The Zn(2+) site is built by cysteine 785, cysteine 788, cysteine 804, and cysteine 808. Residue lysine 810 forms a Glycyl lysine isopeptide (Lys-Gly) (interchain with G-Cter in SUMO2) linkage. Disordered stretches follow at residues 827-847 (RKPD…PDGA) and 864-889 (EEDL…SERE). The SAM domain maps to 919–983 (WTVDDVWAFI…CARINSLKES (65 aa)).

Component of a PRC1-like complex.

The protein localises to the nucleus. In terms of biological role, component of a Polycomb group (PcG) multiprotein PRC1-like complex, a complex class required to maintain the transcriptionally repressive state of many genes, including Hox genes, throughout development. PcG PRC1 complex acts via chromatin remodeling and modification of histones; it mediates monoubiquitination of histone H2A 'Lys-119', rendering chromatin heritably changed in its expressibility. This Homo sapiens (Human) protein is Polyhomeotic-like protein 3 (PHC3).